A 468-amino-acid polypeptide reads, in one-letter code: Argininosuccinate lyase (468 aa).

This sequence belongs to the lyase 1 family. Argininosuccinate lyase subfamily.

The protein resides in the cytoplasm. It carries out the reaction 2-(N(omega)-L-arginino)succinate = fumarate + L-arginine. The protein operates within amino-acid biosynthesis; L-arginine biosynthesis; L-arginine from L-ornithine and carbamoyl phosphate: step 3/3. The chain is Argininosuccinate lyase from Paraburkholderia phymatum (strain DSM 17167 / CIP 108236 / LMG 21445 / STM815) (Burkholderia phymatum).